The primary structure comprises 625 residues: Chaperone protein HtpG (625 aa).

Residues 1–337 form an a; substrate-binding region; that stretch reads MNIQKKEVYS…SNNLPLNVSR (337 aa). Positions 338-552 are b; that stretch reads EILQDNSITQ…SNEMSTQMAK (215 aa). Residues 553–625 are c; that stretch reads LFSAAGQSVP…ARTNKLILEQ (73 aa).

Belongs to the heat shock protein 90 family. Homodimer.

It localises to the cytoplasm. Functionally, molecular chaperone. Has ATPase activity. The protein is Chaperone protein HtpG of Buchnera aphidicola subsp. Schizaphis graminum (strain Sg).